The primary structure comprises 341 residues: KH domain-containing RNA-binding protein QKI (341 aa).

The interval 11 to 82 (PNPTPDYLMQ…PDAVGPIVQL (72 aa)) is qua1 domain; involved in homodimerization. Positions 87-153 (YVPVKEYPDF…WEHLNEDLHV (67 aa)) constitute a KH domain. The segment at 182–213 (AAEGEDSLKKMQLMELAILNGTYRDANIKSPA) is qua2 domain; involved in RNA binding. Ser188 carries the post-translational modification Phosphoserine. An Omega-N-methylarginine modification is found at Arg227. Arg242 is modified (asymmetric dimethylarginine; by CARM1; alternate). The residue at position 242 (Arg242) is an Omega-N-methylarginine; alternate. Arg256 bears the Omega-N-methylarginine mark. Positions 276–279 (PPGP) match the SH3-binding motif. The short motif at 324–330 (RVHPYQR) is the Nuclear localization signal element.

The protein belongs to the quaking family. Homodimer; does not require RNA to homodimerize. Able to heterodimerize with BICC1. Methylated by PRMT1. In terms of processing, tyrosine phosphorylated at its C-terminus, probably by FYN. Phosphorylation leads to decreased mRNA-binding affinity, affecting transport and/or stabilization of MBP mRNA. Post-translationally, ubiquitinated by RNF6 in macrophages, leading to its degradation. In terms of tissue distribution, present in myelinating oligodendrocytes (at protein level).

It is found in the nucleus. Its subcellular location is the cytoplasm. In terms of biological role, RNA reader protein, which recognizes and binds specific RNAs, thereby regulating RNA metabolic processes, such as pre-mRNA splicing, circular RNA (circRNA) formation, mRNA export, mRNA stability and/or translation. Involved in various cellular processes, such as mRNA storage into stress granules, apoptosis, lipid deposition, interferon response, glial cell fate and development. Binds to the 5'-NACUAAY-N(1,20)-UAAY-3' RNA core sequence. Acts as a mRNA modification reader that specifically recognizes and binds mRNA transcripts modified by internal N(7)-methylguanine (m7G). Promotes the formation of circular RNAs (circRNAs) during the epithelial to mesenchymal transition and in cardiomyocytes: acts by binding to sites flanking circRNA-forming exons. CircRNAs are produced by back-splicing circularization of pre-mRNAs. Plays a central role in myelinization via 3 distinct mechanisms. First, acts by protecting and promoting stability of target mRNAs such as MBP, SIRT2 and CDKN1B, which promotes oligodendrocyte differentiation. Second, participates in mRNA transport by regulating the nuclear export of MBP mRNA. Finally, indirectly regulates mRNA splicing of MAG pre-mRNA during oligodendrocyte differentiation by acting as a negative regulator of MAG exon 12 alternative splicing: acts by binding to HNRNPA1 mRNA splicing factor, preventing its translation. Involved in microglia differentiation and remyelination by regulating microexon alternative splicing of the Rho GTPase pathway. Involved in macrophage differentiation: promotes monocyte differentiation by regulating pre-mRNA splicing in naive peripheral blood monocytes. Acts as an important regulator of muscle development: required for the contractile function of cardiomyocytes by regulating alternative splicing of cardiomyocyte transcripts. Acts as a negative regulator of thermogenesis by decreasing stability, nuclear export and translation of mRNAs encoding PPARGC1A and UCP1. Also required for visceral endoderm function and blood vessel development. May also play a role in smooth muscle development. In addition to its RNA-binding activity, also acts as a nuclear transcription coactivator for SREBF2/SREBP2. The sequence is that of KH domain-containing RNA-binding protein QKI from Rattus norvegicus (Rat).